A 359-amino-acid polypeptide reads, in one-letter code: Photosystem II protein D1 1 (359 aa).

The next 3 helical transmembrane spans lie at 29–46 (YVGWFGVLMIPTLLAATI), 118–133 (HFLIGIYAYMGREWEL), and 142–156 (WICVAYSAPVAAASA). His118 is a chlorophyll a binding site. Tyr126 lines the pheophytin a pocket. Positions 170 and 189 each coordinate [CaMn4O5] cluster. The chain crosses the membrane as a helical span at residues 197 to 218 (FHMLGVAGVFGGSLFSAMHGSL). His198 serves as a coordination point for chlorophyll a. Residues His215 and 264-265 (SF) each bind a quinone. Residue His215 coordinates Fe cation. Residue His272 coordinates Fe cation. A helical transmembrane segment spans residues 274–288 (FLAAWPVVGIWFTAL). [CaMn4O5] cluster-binding residues include His332, Glu333, Asp342, and Ala344. The propeptide occupies 345-359 (AAESTPVALQAPAIG).

It belongs to the reaction center PufL/M/PsbA/D family. As to quaternary structure, PSII is composed of 1 copy each of membrane proteins PsbA, PsbB, PsbC, PsbD, PsbE, PsbF, PsbH, PsbI, PsbJ, PsbK, PsbL, PsbM, PsbT, PsbX, PsbY, PsbZ, Psb30/Ycf12, peripheral proteins PsbO, CyanoQ (PsbQ), PsbU, PsbV and a large number of cofactors. It forms dimeric complexes. The cofactor is The D1/D2 heterodimer binds P680, chlorophylls that are the primary electron donor of PSII, and subsequent electron acceptors. It shares a non-heme iron and each subunit binds pheophytin, quinone, additional chlorophylls, carotenoids and lipids. D1 provides most of the ligands for the Mn4-Ca-O5 cluster of the oxygen-evolving complex (OEC). There is also a Cl(-1) ion associated with D1 and D2, which is required for oxygen evolution. The PSII complex binds additional chlorophylls, carotenoids and specific lipids.. Tyr-161 forms a radical intermediate that is referred to as redox-active TyrZ, YZ or Y-Z. In terms of processing, C-terminally processed by CtpA; processing is essential to allow assembly of the oxygen-evolving complex and thus photosynthetic growth.

The protein resides in the cellular thylakoid membrane. The enzyme catalyses 2 a plastoquinone + 4 hnu + 2 H2O = 2 a plastoquinol + O2. In terms of biological role, photosystem II (PSII) is a light-driven water:plastoquinone oxidoreductase that uses light energy to abstract electrons from H(2)O, generating O(2) and a proton gradient subsequently used for ATP formation. It consists of a core antenna complex that captures photons, and an electron transfer chain that converts photonic excitation into a charge separation. The D1/D2 (PsbA/PsbD) reaction center heterodimer binds P680, the primary electron donor of PSII as well as several subsequent electron acceptors. The polypeptide is Photosystem II protein D1 1 (Parasynechococcus marenigrum (strain WH8102)).